We begin with the raw amino-acid sequence, 167 residues long: Lipoprotein signal peptidase (167 aa).

Helical transmembrane passes span 10–30 (LIWLLLSIAIIALDQATKAWV), 68–88 (WQMWLFIALALGISGLLTFWL), and 98–118 (SALPYALIIGGGIGNVIDRFL). Catalysis depends on residues Asp124 and Asp142. Residues 138 to 158 (FNLADSAIVAGAIGIGLLSLF) form a helical membrane-spanning segment.

This sequence belongs to the peptidase A8 family.

It localises to the cell inner membrane. It catalyses the reaction Release of signal peptides from bacterial membrane prolipoproteins. Hydrolyzes -Xaa-Yaa-Zaa-|-(S,diacylglyceryl)Cys-, in which Xaa is hydrophobic (preferably Leu), and Yaa (Ala or Ser) and Zaa (Gly or Ala) have small, neutral side chains.. It functions in the pathway protein modification; lipoprotein biosynthesis (signal peptide cleavage). Its function is as follows. This protein specifically catalyzes the removal of signal peptides from prolipoproteins. The protein is Lipoprotein signal peptidase of Xylella fastidiosa (strain M23).